Here is a 458-residue protein sequence, read N- to C-terminus: Pentatricopeptide repeat-containing protein At1g77405 (458 aa).

PPR repeat units follow at residues 164–198 (TTAS…HCKP), 199–233 (DVYA…GFRY), 236–271 (DTYT…NRMF), 282–316 (DVVT…GCVP), 317–351 (NQVT…GHGV), 353–387 (GSST…GLVP), and 388–419 (REYT…MREG).

The protein belongs to the PPR family. P subfamily.

This chain is Pentatricopeptide repeat-containing protein At1g77405, found in Arabidopsis thaliana (Mouse-ear cress).